The primary structure comprises 421 residues: Acetate kinase (421 aa).

Asparagine 7 contributes to the Mg(2+) binding site. An ATP-binding site is contributed by lysine 14. Arginine 91 provides a ligand contact to substrate. Catalysis depends on aspartate 148, which acts as the Proton donor/acceptor. ATP contacts are provided by residues 208–212 (HIGNG) and 283–285 (DRR). A Mg(2+)-binding site is contributed by glutamate 387.

This sequence belongs to the acetokinase family. As to quaternary structure, homodimer. Mg(2+) is required as a cofactor. Mn(2+) serves as cofactor.

The protein resides in the cytoplasm. It catalyses the reaction acetate + ATP = acetyl phosphate + ADP. It participates in metabolic intermediate biosynthesis; acetyl-CoA biosynthesis; acetyl-CoA from acetate: step 1/2. Catalyzes the formation of acetyl phosphate from acetate and ATP. Can also catalyze the reverse reaction. In Geobacter metallireducens (strain ATCC 53774 / DSM 7210 / GS-15), this protein is Acetate kinase.